Here is a 50-residue protein sequence, read N- to C-terminus: Large ribosomal subunit protein eL39 (50 aa).

It belongs to the eukaryotic ribosomal protein eL39 family.

The sequence is that of Large ribosomal subunit protein eL39 from Methanoculleus marisnigri (strain ATCC 35101 / DSM 1498 / JR1).